The sequence spans 275 residues: Phosphonoacetaldehyde hydrolase (275 aa).

The Nucleophile role is filled by Asp15. Mg(2+) contacts are provided by Asp15 and Ala17. Lys56 (schiff-base intermediate with substrate) is an active-site residue. Asp189 serves as a coordination point for Mg(2+).

The protein belongs to the HAD-like hydrolase superfamily. PhnX family. As to quaternary structure, homodimer. The cofactor is Mg(2+).

It carries out the reaction phosphonoacetaldehyde + H2O = acetaldehyde + phosphate + H(+). Its function is as follows. Involved in phosphonate degradation. This Pseudomonas fluorescens (strain SBW25) protein is Phosphonoacetaldehyde hydrolase.